We begin with the raw amino-acid sequence, 262 residues long: Acyl-[acyl-carrier-protein]--UDP-N-acetylglucosamine O-acyltransferase (262 aa).

Belongs to the transferase hexapeptide repeat family. LpxA subfamily. Homotrimer.

The protein resides in the cytoplasm. It carries out the reaction a (3R)-hydroxyacyl-[ACP] + UDP-N-acetyl-alpha-D-glucosamine = a UDP-3-O-[(3R)-3-hydroxyacyl]-N-acetyl-alpha-D-glucosamine + holo-[ACP]. The protein operates within glycolipid biosynthesis; lipid IV(A) biosynthesis; lipid IV(A) from (3R)-3-hydroxytetradecanoyl-[acyl-carrier-protein] and UDP-N-acetyl-alpha-D-glucosamine: step 1/6. In terms of biological role, involved in the biosynthesis of lipid A, a phosphorylated glycolipid that anchors the lipopolysaccharide to the outer membrane of the cell. This Aliivibrio fischeri (strain ATCC 700601 / ES114) (Vibrio fischeri) protein is Acyl-[acyl-carrier-protein]--UDP-N-acetylglucosamine O-acyltransferase.